The sequence spans 526 residues: Probable feruloyl esterase B (526 aa).

The signal sequence occupies residues 1–18 (MARLSLLTLLALGSAALA). 2 cysteine pairs are disulfide-bonded: C27/C74 and C62/C113. N137 carries an N-linked (GlcNAc...) asparagine glycan. 4 cysteine pairs are disulfide-bonded: C186–C441, C255–C272, C281–C291, and C503–C525. S187 (acyl-ester intermediate) is an active-site residue. The N-linked (GlcNAc...) asparagine glycan is linked to N233. The Ca(2+) site is built by D256, D259, A261, D263, and I265. A glycan (N-linked (GlcNAc...) asparagine) is linked at N311. Residues D400 and H440 each act as charge relay system in the active site. N516 carries N-linked (GlcNAc...) asparagine glycosylation.

This sequence belongs to the tannase family.

The protein resides in the secreted. It carries out the reaction feruloyl-polysaccharide + H2O = ferulate + polysaccharide.. Its function is as follows. Involved in degradation of plant cell walls. Hydrolyzes the feruloyl-arabinose ester bond in arabinoxylans as well as the feruloyl-galactose and feruloyl-arabinose ester bonds in pectin. This is Probable feruloyl esterase B (faeB) from Aspergillus clavatus (strain ATCC 1007 / CBS 513.65 / DSM 816 / NCTC 3887 / NRRL 1 / QM 1276 / 107).